Reading from the N-terminus, the 447-residue chain is T-box transcription factor TBX20 (447 aa).

Positions 62-81 (DAHGEFGGGSGSSPSSSSLC) are disordered. A DNA-binding region (T-box) is located at residues 109-288 (LWDKFHELGT…SNPFAKGFRD (180 aa)). The interval 316 to 340 (TYGGEEDVLGDESQTTPNRGSAFTT) is disordered. Over residues 327-340 (ESQTTPNRGSAFTT) the composition is skewed to polar residues.

Its subcellular location is the nucleus. Its function is as follows. Acts as a transcriptional activator and repressor required for cardiac development and may have key roles in the maintenance of functional and structural phenotypes in adult heart. This Homo sapiens (Human) protein is T-box transcription factor TBX20 (TBX20).